Here is a 189-residue protein sequence, read N- to C-terminus: DVLFARTMHGVFKNIEFMCTRKDSKTWGKDAWKKIVVCVVSDGRAKINPRTRAVLAGLGVYQDGIAKQQVNGKDVTAHIYEYTTQVGISLKKDIVTLTPKQQPVQLLFCLKEKNQKKINSHRWFFQAFGRVLDPNICVLLDAGTKPGKDSIYHLWKAFDLEPHCAGACGEIKAMLGPGGKNLVNPLVAT.

The protein belongs to the chitin synthase family. Class I subfamily.

It is found in the cell membrane. It catalyses the reaction [(1-&gt;4)-N-acetyl-beta-D-glucosaminyl](n) + UDP-N-acetyl-alpha-D-glucosamine = [(1-&gt;4)-N-acetyl-beta-D-glucosaminyl](n+1) + UDP + H(+). Its function is as follows. Polymerizes chitin, a structural polymer of the cell wall and septum, by transferring the sugar moiety of UDP-GlcNAc to the non-reducing end of the growing chitin polymer. In Botryotinia fuckeliana (Noble rot fungus), this protein is Chitin synthase 1 (chs1).